Reading from the N-terminus, the 50-residue chain is Small ribosomal subunit protein uS14 (50 aa).

The Zn(2+) site is built by Cys15, Cys18, Cys33, and Cys36.

This sequence belongs to the universal ribosomal protein uS14 family. Zinc-binding uS14 subfamily. In terms of assembly, part of the 30S ribosomal subunit. Zn(2+) is required as a cofactor.

Binds 16S rRNA, required for the assembly of 30S particles. This chain is Small ribosomal subunit protein uS14, found in Methanosarcina barkeri (strain Fusaro / DSM 804).